A 331-amino-acid chain; its full sequence is Ketol-acid reductoisomerase (NADP(+)) (331 aa).

The KARI N-terminal Rossmann domain occupies 2-182 (AQLFYDSDAD…GGTRAGILET (181 aa)). Residues 25–28 (YGSQ), Ser-51, Ser-53, and 83–86 (DEFQ) each bind NADP(+). His-108 is a catalytic residue. NADP(+) is bound at residue Gly-134. The KARI C-terminal knotted domain maps to 183 to 328 (NFKEETETDL…KGLRAMFSWL (146 aa)). Mg(2+) contacts are provided by Asp-191, Glu-195, Glu-227, and Glu-231. A substrate-binding site is contributed by Ser-252.

This sequence belongs to the ketol-acid reductoisomerase family. Requires Mg(2+) as cofactor.

It carries out the reaction (2R)-2,3-dihydroxy-3-methylbutanoate + NADP(+) = (2S)-2-acetolactate + NADPH + H(+). The enzyme catalyses (2R,3R)-2,3-dihydroxy-3-methylpentanoate + NADP(+) = (S)-2-ethyl-2-hydroxy-3-oxobutanoate + NADPH + H(+). It participates in amino-acid biosynthesis; L-isoleucine biosynthesis; L-isoleucine from 2-oxobutanoate: step 2/4. The protein operates within amino-acid biosynthesis; L-valine biosynthesis; L-valine from pyruvate: step 2/4. Involved in the biosynthesis of branched-chain amino acids (BCAA). Catalyzes an alkyl-migration followed by a ketol-acid reduction of (S)-2-acetolactate (S2AL) to yield (R)-2,3-dihydroxy-isovalerate. In the isomerase reaction, S2AL is rearranged via a Mg-dependent methyl migration to produce 3-hydroxy-3-methyl-2-ketobutyrate (HMKB). In the reductase reaction, this 2-ketoacid undergoes a metal-dependent reduction by NADPH to yield (R)-2,3-dihydroxy-isovalerate. The polypeptide is Ketol-acid reductoisomerase (NADP(+)) (Prochlorococcus marinus (strain MIT 9211)).